We begin with the raw amino-acid sequence, 487 residues long: Transmembrane protein 161B (487 aa).

A glycan (N-linked (GlcNAc...) asparagine) is linked at N34. The helical transmembrane segment at 107-127 (LVDFTVAATIVYLVTEVYYSF) threads the bilayer. Residue N135 is glycosylated (N-linked (GlcNAc...) asparagine). Transmembrane regions (helical) follow at residues 136-156 (ISLVWCLLVLSFAIKVLFSLT) and 169-189 (SVCVTFGFFFFVKAMAVLIVT). N203 is a glycosylation site (N-linked (GlcNAc...) asparagine). Helical transmembrane passes span 228–248 (FKFFLAVFCSLIGAFLTFPGL), 265–285 (ITQTLLHINFLAPLFMVLLWV), 305–325 (LMTEATFDTLRLWLIILLCVL), 367–387 (VFYYLCVIALQYVAPLVMLLH), and 459–479 (LSFLTWWIAACLFSTSLFGLF).

Belongs to the TMEM161 family.

The protein resides in the cell membrane. Its function is as follows. Essential for maintaining normal cardiac rhythm in the developing heart and for neonatal survival. Inhibits potassium and calcium currents in the cardiomyocytes, this assists in timely action potential repolarization and thereby maintains normal cardiac rhythm. The protein is Transmembrane protein 161B (Tmem161b) of Mus musculus (Mouse).